The primary structure comprises 476 residues: Sulfate adenylyltransferase subunit 1 (476 aa).

The region spanning Lys-24–Lys-240 is the tr-type G domain. Residues Gly-33 to Ser-40 form a G1 region. Gly-33–Ser-40 contributes to the GTP binding site. A G2 region spans residues Gly-91–Asp-95. The segment at Asp-112 to Gly-115 is G3. Residues Asp-112 to His-116 and Asn-167 to Asp-170 contribute to the GTP site. The interval Asn-167 to Asp-170 is G4. Positions Ser-205–Leu-207 are G5.

It belongs to the TRAFAC class translation factor GTPase superfamily. Classic translation factor GTPase family. CysN/NodQ subfamily. As to quaternary structure, heterodimer composed of CysD, the smaller subunit, and CysN.

The enzyme catalyses sulfate + ATP + H(+) = adenosine 5'-phosphosulfate + diphosphate. The protein operates within sulfur metabolism; hydrogen sulfide biosynthesis; sulfite from sulfate: step 1/3. With CysD forms the ATP sulfurylase (ATPS) that catalyzes the adenylation of sulfate producing adenosine 5'-phosphosulfate (APS) and diphosphate, the first enzymatic step in sulfur assimilation pathway. APS synthesis involves the formation of a high-energy phosphoric-sulfuric acid anhydride bond driven by GTP hydrolysis by CysN coupled to ATP hydrolysis by CysD. This chain is Sulfate adenylyltransferase subunit 1, found in Vibrio cholerae serotype O1 (strain ATCC 39541 / Classical Ogawa 395 / O395).